The primary structure comprises 483 residues: Cysteine proteinase 1, mitochondrial (483 aa).

The transit peptide at 1-30 (MLPTSVSRSLYLKTFRSHLLRAPQIVLKRM) directs the protein to the mitochondrion. Residues Cys-102, His-398, and Asn-421 contribute to the active site. Position 483 (Lys-483) is a propeptide, removed in mature form; by autocatalysis.

It belongs to the peptidase C1 family. Homohexamer. Binds to nucleic acids. Binds single-stranded DNA and RNA with higher affinity than double-stranded DNA. In terms of processing, the N-terminus of isoform Cytoplasmic is blocked.

It localises to the mitochondrion. Its subcellular location is the cytoplasm. The catalysed reaction is Inactivates bleomycin B2 (a cytotoxic glycometallopeptide) by hydrolysis of a carboxyamide bond of beta-aminoalanine, but also shows general aminopeptidase activity. The specificity varies somewhat with source, but amino acid arylamides of Met, Leu and Ala are preferred.. Inhibited by E64, a specific inhibitor of cysteine proteases, N-ethylmaleimide, iodacetamide, and mercury and zinc ions. The normal physiological role of the enzyme is unknown, but it is not essential for the viability of yeast cells. Has aminopeptidase activity, shortening substrate peptides sequentially by 1 amino acid. Has bleomycin hydrolase activity, which can protect the cell from the toxic effects of bleomycin. Has homocysteine-thiolactonase activity, protecting the cell against homocysteine toxicity. Acts as a repressor in the GAL4 regulatory system, but this does not require either the peptidase or nucleic acid-binding activities. This Saccharomyces cerevisiae (strain JAY291) (Baker's yeast) protein is Cysteine proteinase 1, mitochondrial (LAP3).